We begin with the raw amino-acid sequence, 488 residues long: UDP-glycosyltransferase 92A1 (488 aa).

UDP-alpha-D-glucose contacts are provided by residues Ser-292, 358–360 (APQ), 375–383 (HCGWNSILE), and 397–400 (AAEQ).

Belongs to the UDP-glycosyltransferase family.

This Arabidopsis thaliana (Mouse-ear cress) protein is UDP-glycosyltransferase 92A1 (UGT92A1).